Consider the following 228-residue polypeptide: Ribonuclease 3 (228 aa).

The 123-residue stretch at 5–127 (LMALQARLQH…VIGAVYLDAG (123 aa)) folds into the RNase III domain. A Mg(2+)-binding site is contributed by Glu40. Asp44 is an active-site residue. 2 residues coordinate Mg(2+): Asp113 and Glu116. Glu116 is a catalytic residue. Positions 154 to 224 (DPKTELQEWL…AAAMLQTLKA (71 aa)) constitute a DRBM domain.

Belongs to the ribonuclease III family. In terms of assembly, homodimer. It depends on Mg(2+) as a cofactor.

It is found in the cytoplasm. The enzyme catalyses Endonucleolytic cleavage to 5'-phosphomonoester.. Digests double-stranded RNA. Involved in the processing of primary rRNA transcript to yield the immediate precursors to the large and small rRNAs (23S and 16S). Processes some mRNAs, and tRNAs when they are encoded in the rRNA operon. Processes pre-crRNA and tracrRNA of type II CRISPR loci if present in the organism. This Albidiferax ferrireducens (strain ATCC BAA-621 / DSM 15236 / T118) (Rhodoferax ferrireducens) protein is Ribonuclease 3.